A 476-amino-acid polypeptide reads, in one-letter code: Bifunctional protein HldE (476 aa).

Residues 1–319 (MKVTLPAFEK…EALKSHQGES (319 aa)) form a ribokinase region. 195–198 (NMSE) is an ATP binding site. The active site involves Asp-264. Residues 345–476 (MTNGCFDILH…AIIQNIMSRH (132 aa)) form a cytidylyltransferase region.

In the N-terminal section; belongs to the carbohydrate kinase PfkB family. The protein in the C-terminal section; belongs to the cytidylyltransferase family. As to quaternary structure, homodimer.

The catalysed reaction is D-glycero-beta-D-manno-heptose 7-phosphate + ATP = D-glycero-beta-D-manno-heptose 1,7-bisphosphate + ADP + H(+). It catalyses the reaction D-glycero-beta-D-manno-heptose 1-phosphate + ATP + H(+) = ADP-D-glycero-beta-D-manno-heptose + diphosphate. It participates in nucleotide-sugar biosynthesis; ADP-L-glycero-beta-D-manno-heptose biosynthesis; ADP-L-glycero-beta-D-manno-heptose from D-glycero-beta-D-manno-heptose 7-phosphate: step 1/4. The protein operates within nucleotide-sugar biosynthesis; ADP-L-glycero-beta-D-manno-heptose biosynthesis; ADP-L-glycero-beta-D-manno-heptose from D-glycero-beta-D-manno-heptose 7-phosphate: step 3/4. Catalyzes the phosphorylation of D-glycero-D-manno-heptose 7-phosphate at the C-1 position to selectively form D-glycero-beta-D-manno-heptose-1,7-bisphosphate. In terms of biological role, catalyzes the ADP transfer from ATP to D-glycero-beta-D-manno-heptose 1-phosphate, yielding ADP-D-glycero-beta-D-manno-heptose. The polypeptide is Bifunctional protein HldE (Shewanella amazonensis (strain ATCC BAA-1098 / SB2B)).